The sequence spans 879 residues: Alanine--tRNA ligase (879 aa).

The Zn(2+) site is built by H567, H571, C669, and H673.

Belongs to the class-II aminoacyl-tRNA synthetase family. It depends on Zn(2+) as a cofactor.

The protein resides in the cytoplasm. The catalysed reaction is tRNA(Ala) + L-alanine + ATP = L-alanyl-tRNA(Ala) + AMP + diphosphate. Catalyzes the attachment of alanine to tRNA(Ala) in a two-step reaction: alanine is first activated by ATP to form Ala-AMP and then transferred to the acceptor end of tRNA(Ala). Also edits incorrectly charged Ser-tRNA(Ala) and Gly-tRNA(Ala) via its editing domain. This chain is Alanine--tRNA ligase, found in Lactobacillus acidophilus (strain ATCC 700396 / NCK56 / N2 / NCFM).